Reading from the N-terminus, the 492-residue chain is Bifunctional purine biosynthesis protein PurH (492 aa).

The region spanning 1–144 is the MGS-like domain; it reads MKKAILSVSN…KNFKHVTTIV (144 aa).

The protein belongs to the PurH family.

The enzyme catalyses (6R)-10-formyltetrahydrofolate + 5-amino-1-(5-phospho-beta-D-ribosyl)imidazole-4-carboxamide = 5-formamido-1-(5-phospho-D-ribosyl)imidazole-4-carboxamide + (6S)-5,6,7,8-tetrahydrofolate. It catalyses the reaction IMP + H2O = 5-formamido-1-(5-phospho-D-ribosyl)imidazole-4-carboxamide. Its pathway is purine metabolism; IMP biosynthesis via de novo pathway; 5-formamido-1-(5-phospho-D-ribosyl)imidazole-4-carboxamide from 5-amino-1-(5-phospho-D-ribosyl)imidazole-4-carboxamide (10-formyl THF route): step 1/1. It functions in the pathway purine metabolism; IMP biosynthesis via de novo pathway; IMP from 5-formamido-1-(5-phospho-D-ribosyl)imidazole-4-carboxamide: step 1/1. The protein is Bifunctional purine biosynthesis protein PurH of Staphylococcus epidermidis (strain ATCC 35984 / DSM 28319 / BCRC 17069 / CCUG 31568 / BM 3577 / RP62A).